We begin with the raw amino-acid sequence, 450 residues long: Phosphoglucosamine mutase (450 aa).

Serine 101 serves as the catalytic Phosphoserine intermediate. Residues serine 101, aspartate 241, aspartate 243, and aspartate 245 each coordinate Mg(2+). Serine 101 carries the post-translational modification Phosphoserine.

This sequence belongs to the phosphohexose mutase family. Mg(2+) serves as cofactor. Activated by phosphorylation.

It carries out the reaction alpha-D-glucosamine 1-phosphate = D-glucosamine 6-phosphate. Catalyzes the conversion of glucosamine-6-phosphate to glucosamine-1-phosphate. In Listeria welshimeri serovar 6b (strain ATCC 35897 / DSM 20650 / CCUG 15529 / CIP 8149 / NCTC 11857 / SLCC 5334 / V8), this protein is Phosphoglucosamine mutase.